The following is a 573-amino-acid chain: NEDD4-binding protein 3-B (573 aa).

Disordered regions lie at residues 119–138 (EFSK…RFGP), 173–220 (CVGS…NSYS), and 384–405 (GENE…NLED). Over residues 125 to 135 (LPERGHSDKSR) the composition is skewed to basic and acidic residues. Positions 186 to 196 (SNSHSNNPSES) are enriched in low complexity. 2 stretches are compositionally biased toward polar residues: residues 207 to 220 (DSKQ…NSYS) and 392 to 401 (KQSQSDNSGP). The stretch at 287–474 (ESVEDVARQL…CLQALEDVKS (188 aa)) forms a coiled coil.

The protein belongs to the N4BP3 family.

The protein localises to the cytoplasmic vesicle. The protein resides in the cell projection. It localises to the axon. Its subcellular location is the dendrite. In terms of biological role, plays a role in axon and dendrite arborization during cranial nerve development. Also important for neural crest migration and early development of other anterior structures including eye, brain and cranial cartilage. The sequence is that of NEDD4-binding protein 3-B from Xenopus laevis (African clawed frog).